The sequence spans 233 residues: Homeobox protein ceh-30 (233 aa).

The span at 50–85 shows a compositional bias: polar residues; that stretch reads NNSTYSHDLDPSPQSVRSDLSTSPRASSPDRNSPMS. 2 disordered regions span residues 50–93 and 206–233; these read NNST…KART and FQAT…SNSD. A DNA-binding region (homeobox) is located at residues 88 to 147; sequence SRKARTIFTDKQLQELENTFEKQKYLSVQDRMDLAHRMGLSDTQVKTWYQNRRTKWKRQA. Residues 224–233 show a composition bias toward polar residues; sequence PQLDVSSNSD.

It localises to the nucleus. Its function is as follows. Cell-type specific anti-apoptotic transcription factor required for the sexually dimorphic survival of the male-specific CEM (cephalic male) sensory neurons during sex determination. In hermaphrodites, the homologous cells undergo programmed cell death due to transcriptional repression of ceh-30 by tra-1, the terminal regulator in the sex determination pathway. This chain is Homeobox protein ceh-30, found in Caenorhabditis briggsae.